The sequence spans 861 residues: Ribosome biogenesis protein BOP1 homolog (861 aa).

A disordered region spans residues 1 to 237 (MVANKSKATK…GDTSDEEDIR (237 aa)). Over residues 29-45 (NGRSTKQPEADSDQSAS) the composition is skewed to polar residues. Composition is skewed to acidic residues over residues 62–77 (DDGD…DASD) and 87–143 (SDSD…EDLA). 3 stretches are compositionally biased toward basic and acidic residues: residues 144-156 (EPEK…EGSK), 174-190 (ETKK…EKLA), and 212-223 (PERKTGRLKNSD). WD repeat units follow at residues 522-561 (GHTD…CIKT), 563-603 (PTGD…CLLS), 692-730 (KSKG…LLKK), 733-772 (PSCK…RPYQ), 776-815 (LHFS…DLMQ), and 831-861 (VNDF…RLYT).

It belongs to the WD repeat BOP1/ERB1 family.

It localises to the nucleus. It is found in the nucleolus. The protein localises to the nucleoplasm. Required for maturation of ribosomal RNAs and formation of the large ribosomal subunit. The chain is Ribosome biogenesis protein BOP1 homolog from Culex quinquefasciatus (Southern house mosquito).